A 70-amino-acid chain; its full sequence is Small ribosomal subunit protein bS21 (70 aa).

Belongs to the bacterial ribosomal protein bS21 family.

The protein is Small ribosomal subunit protein bS21 of Campylobacter curvus (strain 525.92).